The sequence spans 151 residues: Putative coiled-coil-helix-coiled-coil-helix domain-containing protein CHCHD2P9, mitochondrial (151 aa).

A mitochondrion-targeting transit peptide spans M1–T9. 2 disordered regions span residues M1–P50 and T75–Q110. Over residues S10–P26 the composition is skewed to low complexity. Pro residues predominate over residues R27–A38. Low complexity-rich tracts occupy residues P39–P50 and Q100–Q110. The 41-residue stretch at Q111–A151 folds into the CHCH domain. Short sequence motifs (cx9C motif) lie at residues C114–C124 and C134–C144. 2 cysteine pairs are disulfide-bonded: C114–C144 and C124–C134.

It localises to the mitochondrion. This is Putative coiled-coil-helix-coiled-coil-helix domain-containing protein CHCHD2P9, mitochondrial (CHCHD2P9) from Homo sapiens (Human).